Consider the following 289-residue polypeptide: ATP synthase gamma chain (289 aa).

It belongs to the ATPase gamma chain family. In terms of assembly, F-type ATPases have 2 components, CF(1) - the catalytic core - and CF(0) - the membrane proton channel. CF(1) has five subunits: alpha(3), beta(3), gamma(1), delta(1), epsilon(1). CF(0) has three main subunits: a, b and c.

The protein resides in the cell membrane. Its function is as follows. Produces ATP from ADP in the presence of a proton gradient across the membrane. The gamma chain is believed to be important in regulating ATPase activity and the flow of protons through the CF(0) complex. The protein is ATP synthase gamma chain of Lactococcus lactis subsp. cremoris (strain SK11).